The primary structure comprises 412 residues: Gamma-glutamyl phosphate reductase (412 aa).

Belongs to the gamma-glutamyl phosphate reductase family.

Its subcellular location is the cytoplasm. It carries out the reaction L-glutamate 5-semialdehyde + phosphate + NADP(+) = L-glutamyl 5-phosphate + NADPH + H(+). The protein operates within amino-acid biosynthesis; L-proline biosynthesis; L-glutamate 5-semialdehyde from L-glutamate: step 2/2. In terms of biological role, catalyzes the NADPH-dependent reduction of L-glutamate 5-phosphate into L-glutamate 5-semialdehyde and phosphate. The product spontaneously undergoes cyclization to form 1-pyrroline-5-carboxylate. In Nitratiruptor sp. (strain SB155-2), this protein is Gamma-glutamyl phosphate reductase.